Consider the following 958-residue polypeptide: MLMISNCSRDLLQRHFSNYHDPSASEAPVAGAGPSVAGKTPIACLNCSQAKTGCNKEVPCQRCQDKGLHCVQRYARRTSKLAARSQAAATAAAAQASRVAQVTPVTVQQSLPNVSVSIEPSQTLSQIQPPLVHEGGASVTMDPAILEMPLMNSFMKQQDPEVHDGSSPANSITFPLPIHLKAESPRQRTASVDLNFNNMNSEPSPPSIEPMEDQSWVNSLMSNDPNFGPGNMFSSTYDLGYQLGPSYADPTTDFSQMSQSMLQHDASMSSMEFAGSPSGVSPFGDLSTSNSEPSSSSWGSSHTRATSICSAHCLYDQSGEFDVTSNSAKQGLPISTDSDVILTEAAWPMARCTPPIYSGACPRTALGHLQRLEQKSSYQGARPFAWHTLERELSSLNWDNADLASVVPMNSQTRDSLMSISQRFHARALDIHRENDPGRDKSPLGSNCGPMSFLNLPSSKVLEFFMKSYVRSLTSFYSLVSEGRIDPNQMHRNDPASIILMLLMIAQGASAVDSEDARILSMGLIETCRISLLDIIDKNVEMSADPTALRAALLFAHLGAWSGDKWLMDIAMGQRGMYISMLKHAGMLTAQPPICPVLDGDQGQKNSWRLWLQVETKNRLVYDWVMVDQELSLFHDTDPQLDVSELRASLPCSEKLWKSSTVEQWADAVQCYLSKGNPHPLTPPSLYHLYREFLEQKLVDGRVGLTAHQLRLLLHPIQKMLCQQRQTLTCFSDMFVPDQPGHVSFSKAYVMRQVEVVRSLLSRWHDLAMRCLNMNPDCTIMRTNMVLYHLISLNAVTNFPEIESFARQERYDGSYWGSRHQRCIYNRQQAVHDCGQVFSILRNLPTDRLPTWWSAAIYRATMILWADSALQSQSQAHASLSPPEATEGQYAMNAPQDFNHTLDYNVIPYVTRSDGTPFHLDRHSEVLDYAICAIDQGASSRLGEGIKRKLIALGNNWH.

The zn(2)-C6 fungal-type DNA-binding region spans 44-70 (CLNCSQAKTGCNKEVPCQRCQDKGLHC). Residues 272 to 301 (EFAGSPSGVSPFGDLSTSNSEPSSSSWGSS) are disordered. The span at 287 to 301 (STSNSEPSSSSWGSS) shows a compositional bias: low complexity.

It is found in the nucleus. In terms of biological role, transcription factor; part of the gene cluster that mediates the biosynthesis of dihydroxynaphthalene (DHN)-melanin, a bluish-green pigment forming a dark layer in the conidial wall that protects the conidia from UV radiations. The 2 transcription factors present in the cluster, PfmaF and PfmaH, coordinately regulate DHN-melanin production. PfmaH acts as a pathway specific regulator to mediate the expression of Pfma cluster genes including PfmaJ, leading to DHN-melanin production in conidia, and regulates the conidial formation. In Pestalotiopsis fici (strain W106-1 / CGMCC3.15140), this protein is Transcription factor PfmaH (PfmaH).